The chain runs to 729 residues: uncharacterized protein (729 aa).

The protein belongs to the mimivirus L515/L516 family.

It is found in the virion. This is an uncharacterized protein from Acanthamoeba polyphaga mimivirus (APMV).